The primary structure comprises 249 residues: Proteasome subunit alpha type-7-1A (249 aa).

Belongs to the peptidase T1A family. In terms of assembly, the 26S proteasome consists of a 20S proteasome core and two 19S regulatory subunits. The 20S proteasome core is composed of 28 subunits that are arranged in four stacked rings, resulting in a barrel-shaped structure. The two end rings are each formed by seven alpha subunits, and the two central rings are each formed by seven beta subunits. The catalytic chamber with the active sites is on the inside of the barrel. Testis specific.

The protein resides in the cytoplasm. It is found in the nucleus. In terms of biological role, the proteasome is a multicatalytic proteinase complex which is characterized by its ability to cleave peptides with Arg, Phe, Tyr, Leu, and Glu adjacent to the leaving group at neutral or slightly basic pH. The proteasome has an ATP-dependent proteolytic activity. In Drosophila melanogaster (Fruit fly), this protein is Proteasome subunit alpha type-7-1A (Prosalpha4T1).